Reading from the N-terminus, the 287-residue chain is Lactamase-like protein nscB (287 aa).

Zn(2+) contacts are provided by histidine 62, histidine 64, aspartate 66, and histidine 67. Residue aspartate 66 is the Proton donor/acceptor of the active site.

This sequence belongs to the metallo-beta-lactamase superfamily. It depends on Zn(2+) as a cofactor.

Its pathway is secondary metabolite biosynthesis. Functionally, lactamase-like protein; part of the gene cluster that mediates the biosynthesis of neosartoricin B, a prenylated anthracenone that probably exhibits T-cell antiproliferative activity, suggestive of a physiological role as an immunosuppressive agent. The non-reducing polyketide synthase nscA probably synthesizes and cyclizes the decaketide backbone. The hydrolase nscB then mediates the product release through hydrolysis followed by spontaneous decarboxylation. The prenyltransferase nscD catalyzes the addition of the dimethylallyl group to the aromatic C5. The FAD-dependent monooxygenase nscC is then responsible for the stereospecific hydroxylation at C2. Neosartoricin B can be converted into two additional compounds neosartoricins C and D. Neosartoricin C is a spirocyclic compound that is cyclized through the attack of C3 hydroxyl on C14, followed by dehydration. On the other hand, neosartoricin D is a further cyclized compound in which attack of C2 on C14 in neosartoricin C results in the formation of the acetal-containing dioxabicyclo-octanone ring. Both of these compounds are novel and possibly represent related metabolites of the gene cluster. This is Lactamase-like protein nscB from Trichophyton verrucosum (strain HKI 0517).